The sequence spans 56 residues: Large ribosomal subunit protein bL32 (56 aa).

The protein belongs to the bacterial ribosomal protein bL32 family.

In Synechococcus sp. (strain CC9311), this protein is Large ribosomal subunit protein bL32.